The primary structure comprises 544 residues: Glutamyl-tRNA(Gln) amidotransferase subunit B, chloroplastic/mitochondrial (544 aa).

It belongs to the GatB/GatE family. GatB subfamily. Subunit of the heterotrimeric GatCAB amidotransferase (AdT) complex, composed of A, B and C subunits.

It localises to the mitochondrion. The protein resides in the plastid. The protein localises to the chloroplast. The enzyme catalyses L-glutamyl-tRNA(Gln) + L-glutamine + ATP + H2O = L-glutaminyl-tRNA(Gln) + L-glutamate + ADP + phosphate + H(+). In terms of biological role, allows the formation of correctly charged Gln-tRNA(Gln) through the transamidation of misacylated Glu-tRNA(Gln) in chloroplasts and mitochondria. The reaction takes place in the presence of glutamine and ATP through an activated gamma-phospho-Glu-tRNA(Gln). This Oryza sativa subsp. japonica (Rice) protein is Glutamyl-tRNA(Gln) amidotransferase subunit B, chloroplastic/mitochondrial.